We begin with the raw amino-acid sequence, 55 residues long: Large ribosomal subunit protein bL33 (55 aa).

Belongs to the bacterial ribosomal protein bL33 family.

This is Large ribosomal subunit protein bL33 from Deinococcus deserti (strain DSM 17065 / CIP 109153 / LMG 22923 / VCD115).